The sequence spans 263 residues: MPEGPEIRRAADNLEAAIKGKPLTDVWFAFPQLKSYQSRLIGQHVTHVETRGKALLTHFSNDLTLYSHNQLYGVWRVVDTGEEPQTTRVLRVKLQTADKTILLYSASDIEMLTPEQLTTHPFLQRVGHDVLDPNLTPEVVKERLLSPRFRNRQFAGLLLDQAFLAGLGNYLRVEILWQVGLTGNHKAKDLNAAQLDALAHALLDIPRLSYATRGQVDENKYHGALFRFKVFHRDGEPCERCGGIIEKTTLSSRPFYWCPGCQH.

The Schiff-base intermediate with DNA role is filled by Pro2. Glu3 acts as the Proton donor in catalysis. Lys53 (proton donor; for beta-elimination activity) is an active-site residue. DNA-binding residues include Gln70, Arg125, and Asn169. The FPG-type zinc finger occupies Lys229–His263. The active-site Proton donor; for delta-elimination activity is the Arg253.

Belongs to the FPG family. It depends on Zn(2+) as a cofactor.

It carries out the reaction 2'-deoxyribonucleotide-(2'-deoxyribose 5'-phosphate)-2'-deoxyribonucleotide-DNA = a 3'-end 2'-deoxyribonucleotide-(2,3-dehydro-2,3-deoxyribose 5'-phosphate)-DNA + a 5'-end 5'-phospho-2'-deoxyribonucleoside-DNA + H(+). Its function is as follows. Involved in base excision repair of DNA damaged by oxidation or by mutagenic agents. Acts as a DNA glycosylase that recognizes and removes damaged bases. Has a preference for oxidized pyrimidines, such as thymine glycol, 5,6-dihydrouracil and 5,6-dihydrothymine. Has AP (apurinic/apyrimidinic) lyase activity and introduces nicks in the DNA strand. Cleaves the DNA backbone by beta-delta elimination to generate a single-strand break at the site of the removed base with both 3'- and 5'-phosphates. This is Endonuclease 8 from Escherichia coli O127:H6 (strain E2348/69 / EPEC).